The chain runs to 360 residues: MSELETLERTLLAEIEAAADEGAIEAVRVGALGKKGSISELLKTLGSMSAEERQTRGARINALKNTVSEAISARKAELKDAAIAERLARETVDISLPVRSSPAERGRIHPISQIVDEITAIFGDMGFSLAEGPDIETDYYNFTALNFPEGHPAREMHDTFFFAPDEKGERKVLRTHTSPVQIRTMEAEQPPIRIIIPGKTYRQDSDATHSPMFHQVEGLVIDRTANVANMRWVLEEFCKAFFEVDQVTMRFRPSFFPFTEPSFEVDIQCDRSGPIVKFGEGKDWMEILGCGMVHPNVLRAGGLDPDEFQGFAWGMGLDRIAMLKYGMPDLRDFFNADVRWMTHYGFRPLDMPTLFGGLSA.

Residue glutamate 260 participates in Mg(2+) binding.

It belongs to the class-II aminoacyl-tRNA synthetase family. Phe-tRNA synthetase alpha subunit type 1 subfamily. As to quaternary structure, tetramer of two alpha and two beta subunits. It depends on Mg(2+) as a cofactor.

The protein localises to the cytoplasm. The enzyme catalyses tRNA(Phe) + L-phenylalanine + ATP = L-phenylalanyl-tRNA(Phe) + AMP + diphosphate + H(+). This is Phenylalanine--tRNA ligase alpha subunit from Sinorhizobium medicae (strain WSM419) (Ensifer medicae).